Here is a 131-residue protein sequence, read N- to C-terminus: Leptin receptor gene-related protein (131 aa).

4 helical membrane-spanning segments follow: residues 7 to 27, 32 to 52, 69 to 89, and 100 to 120; these read LVAL…GCAL, VYWP…HFIA, LAYF…VILA, and GLVL…FLVF.

It belongs to the OB-RGRP/VPS55 family. As to quaternary structure, interacts with LEPR. Interacts with RAB13.

It is found in the golgi apparatus membrane. The protein resides in the endosome membrane. Negatively regulates leptin receptor (LEPR) cell surface expression, and thus decreases response to leptin/LEP. Negatively regulates growth hormone (GH) receptor cell surface expression in liver. May play a role in liver resistance to GH during periods of reduced nutrient availability. This Bos taurus (Bovine) protein is Leptin receptor gene-related protein (LEPROT).